Reading from the N-terminus, the 104-residue chain is Protein S100-A14 (104 aa).

One can recognise an EF-hand domain in the interval 27-61; the sequence is KNFHQYSVEGGKETLTPSELRDLVTQQLPHLMPSN.

The protein belongs to the S-100 family. Homodimer. Interacts with AGER.

Its subcellular location is the cytoplasm. In terms of biological role, modulates P53/TP53 protein levels, and thereby plays a role in the regulation of cell survival and apoptosis. Depending on the context, it can promote cell proliferation or apoptosis. Plays a role in the regulation of cell migration by modulating the levels of MMP2, a matrix protease that is under transcriptional control of P53/TP53. Does not bind calcium. This Bos taurus (Bovine) protein is Protein S100-A14 (S100A14).